Consider the following 307-residue polypeptide: tRNA dimethylallyltransferase (307 aa).

Glycine 6 to threonine 13 contacts ATP. Threonine 8–threonine 13 is a binding site for substrate. Residues aspartate 31–methionine 34 form an interaction with substrate tRNA region.

Belongs to the IPP transferase family. In terms of assembly, monomer. Mg(2+) serves as cofactor.

It catalyses the reaction adenosine(37) in tRNA + dimethylallyl diphosphate = N(6)-dimethylallyladenosine(37) in tRNA + diphosphate. In terms of biological role, catalyzes the transfer of a dimethylallyl group onto the adenine at position 37 in tRNAs that read codons beginning with uridine, leading to the formation of N6-(dimethylallyl)adenosine (i(6)A). This Sulfurihydrogenibium sp. (strain YO3AOP1) protein is tRNA dimethylallyltransferase.